Here is a 212-residue protein sequence, read N- to C-terminus: Dihydrophenazinedicarboxylate synthase (212 aa).

Residue Ser-8 participates in substrate binding. FMN contacts are provided by residues 63-66 (RVIA) and 78-79 (CT). A substrate-binding site is contributed by His-80. FMN-binding positions include 84–85 (RK) and Gln-107. Substrate-binding residues include Arg-129 and Ser-137. FMN contacts are provided by residues 142–143 (QS) and Arg-195.

It belongs to the pyridoxamine 5'-phosphate oxidase family. Requires FMN as cofactor.

It catalyses the reaction (1R,6R)-1,4,5,5a,6,9-hexahydrophenazine-1,6-dicarboxylate + O2 = (1R,10aS)-1,4,10,10a-tetrahydrophenazine-1,6-dicarboxylate + H2O2. The enzyme catalyses (1R,10aS)-1,4,10,10a-tetrahydrophenazine-1,6-dicarboxylate + O2 = (5aS)-5,5a-dihydrophenazine-1,6-dicarboxylate + H2O2. The catalysed reaction is (1R,10aS)-1,4,10,10a-tetrahydrophenazine-1-carboxylate + O2 = (10aS)-10,10a-dihydrophenazine-1-carboxylate + H2O2. It carries out the reaction (1R)-1,4,5,10-tetrahydrophenazine-1-carboxylate + O2 = (10aS)-10,10a-dihydrophenazine-1-carboxylate + H2O2. Its pathway is antibiotic biosynthesis; phenazine biosynthesis. Involved in the biosynthesis of the antibiotic phenazine, a nitrogen-containing heterocyclic molecule having important roles in virulence, competition and biological control. Catalyzes several oxidations in the terminal steps of core phenazine biosynthesis. It oxidizes both hexahydrophenazine-1,6-dicarboxylic acid (HHPDC) and tetrahydrophenazine-1-carboxylic acid (THPCA) and thereby contributes to the generation of both phenazine-1,6-dicarboxylic acid (PDC) and phenazine-1-carboxylic acid (PCA). It synthesizes phenazines in their reduced form, which are the likely end products in vivo. The sequence is that of Dihydrophenazinedicarboxylate synthase from Burkholderia lata (strain ATCC 17760 / DSM 23089 / LMG 22485 / NCIMB 9086 / R18194 / 383).